Here is a 317-residue protein sequence, read N- to C-terminus: Putative 2-hydroxyacid dehydrogenase SAOUHSC_02577 (317 aa).

Residues 155–156, 234–236, and Asp260 contribute to the NAD(+) site; these read EI and ASR. Arg236 is an active-site residue. The active site involves Glu265. Catalysis depends on His283, which acts as the Proton donor. 283-286 lines the NAD(+) pocket; that stretch reads HIGN.

The protein belongs to the D-isomer specific 2-hydroxyacid dehydrogenase family.

This Staphylococcus aureus (strain NCTC 8325 / PS 47) protein is Putative 2-hydroxyacid dehydrogenase SAOUHSC_02577.